The chain runs to 161 residues: MSKILLGFMGAGKTTVGRLLDPNFHDMDELIVNQIGMSINDFFAQEGEEAFRKIETATLESLLANQAKIISPGGGIVVNPHNRDLLEKNPYNIYLRVDFDTLYKRIENDLAMQRPLYLNNTREEFKKIFEARLPIYEKIATHIIDVAGKTPEEIAEIIRCL.

10 to 15 is an ATP binding site; the sequence is GAGKTT. A Mg(2+)-binding site is contributed by Thr14. Residues Asp28, Arg52, and Gly74 each coordinate substrate. Arg114 contributes to the ATP binding site. Arg132 contributes to the substrate binding site.

It belongs to the shikimate kinase family. As to quaternary structure, monomer. Mg(2+) is required as a cofactor.

It localises to the cytoplasm. The enzyme catalyses shikimate + ATP = 3-phosphoshikimate + ADP + H(+). The protein operates within metabolic intermediate biosynthesis; chorismate biosynthesis; chorismate from D-erythrose 4-phosphate and phosphoenolpyruvate: step 5/7. Catalyzes the specific phosphorylation of the 3-hydroxyl group of shikimic acid using ATP as a cosubstrate. The chain is Shikimate kinase from Streptococcus gordonii (strain Challis / ATCC 35105 / BCRC 15272 / CH1 / DL1 / V288).